Consider the following 875-residue polypeptide: Alanine--tRNA ligase (875 aa).

The Zn(2+) site is built by histidine 562, histidine 566, cysteine 665, and histidine 669.

The protein belongs to the class-II aminoacyl-tRNA synthetase family. It depends on Zn(2+) as a cofactor.

Its subcellular location is the cytoplasm. It catalyses the reaction tRNA(Ala) + L-alanine + ATP = L-alanyl-tRNA(Ala) + AMP + diphosphate. Functionally, catalyzes the attachment of alanine to tRNA(Ala) in a two-step reaction: alanine is first activated by ATP to form Ala-AMP and then transferred to the acceptor end of tRNA(Ala). Also edits incorrectly charged Ser-tRNA(Ala) and Gly-tRNA(Ala) via its editing domain. In Saccharophagus degradans (strain 2-40 / ATCC 43961 / DSM 17024), this protein is Alanine--tRNA ligase.